The following is a 388-amino-acid chain: Ferrochelatase (388 aa).

Fe cation is bound by residues His196 and Glu277.

This sequence belongs to the ferrochelatase family.

The protein resides in the cytoplasm. It carries out the reaction heme b + 2 H(+) = protoporphyrin IX + Fe(2+). Its pathway is porphyrin-containing compound metabolism; protoheme biosynthesis; protoheme from protoporphyrin-IX: step 1/1. In terms of biological role, catalyzes the ferrous insertion into protoporphyrin IX. The sequence is that of Ferrochelatase from Nostoc punctiforme (strain ATCC 29133 / PCC 73102).